Consider the following 125-residue polypeptide: Holo-[acyl-carrier-protein] synthase (125 aa).

Mg(2+) is bound by residues aspartate 8 and glutamate 60.

The protein belongs to the P-Pant transferase superfamily. AcpS family. It depends on Mg(2+) as a cofactor.

The protein resides in the cytoplasm. The catalysed reaction is apo-[ACP] + CoA = holo-[ACP] + adenosine 3',5'-bisphosphate + H(+). In terms of biological role, transfers the 4'-phosphopantetheine moiety from coenzyme A to a Ser of acyl-carrier-protein. This chain is Holo-[acyl-carrier-protein] synthase, found in Wolbachia sp. subsp. Brugia malayi (strain TRS).